Here is a 786-residue protein sequence, read N- to C-terminus: Endonuclease MutS2 (786 aa).

332–339 provides a ligand contact to ATP; that stretch reads GPNTGGKT. A Smr domain is found at 711 to 786; that stretch reads IDLRGMDSEE…GTGVTVVILK (76 aa).

The protein belongs to the DNA mismatch repair MutS family. MutS2 subfamily. In terms of assembly, homodimer. Binds to stalled ribosomes, contacting rRNA.

Endonuclease that is involved in the suppression of homologous recombination and thus may have a key role in the control of bacterial genetic diversity. In terms of biological role, acts as a ribosome collision sensor, splitting the ribosome into its 2 subunits. Detects stalled/collided 70S ribosomes which it binds and splits by an ATP-hydrolysis driven conformational change. Acts upstream of the ribosome quality control system (RQC), a ribosome-associated complex that mediates the extraction of incompletely synthesized nascent chains from stalled ribosomes and their subsequent degradation. Probably generates substrates for RQC. The sequence is that of Endonuclease MutS2 from Clostridium perfringens (strain SM101 / Type A).